The sequence spans 458 residues: Ammonium transporter Rh type B (458 aa).

The Cytoplasmic segment spans residues 1–13; that stretch reads MAKSPRRVAGRRL. A helical membrane pass occupies residues 14–34; sequence LLPLLCLFFQGATAILFAIFV. Residues 35-61 lie on the Extracellular side of the membrane; that stretch reads RYDQQTDAALWHGGNHSNADNEFYFRY. The N-linked (GlcNAc...) asparagine glycan is linked to N49. A helical membrane pass occupies residues 62-82; it reads PSFQDVHAMVFVGFGFLMVFL. Over 83 to 86 the chain is Cytoplasmic; sequence QRYG. A helical membrane pass occupies residues 87-107; the sequence is YSSLGFTFLLGAFALQWATLV. The Extracellular segment spans residues 108-124; sequence QGFLHSFHGGHIHVGME. The helical transmembrane segment at 125-145 threads the bilayer; sequence SLINADFCAGAVLISFGAVLG. Over 146–149 the chain is Cytoplasmic; it reads KTGP. Residues 150-170 traverse the membrane as a helical segment; that stretch reads AQLLLMALLEVALFGLNEFVL. Over 171-178 the chain is Extracellular; the sequence is LCLLGVRD. The chain crosses the membrane as a helical span at residues 179–201; that stretch reads AGGSMTIHTFGAYFGLVLSRVLY. Residues 202–219 lie on the Cytoplasmic side of the membrane; it reads RPHLEKSQHRQGSVYHSD. The helical transmembrane segment at 220-240 threads the bilayer; it reads LFAMIGTIFLWIFWPSFNSAL. Residues 241-251 are Extracellular-facing; it reads TSRGDGQPRTA. The helical transmembrane segment at 252–272 threads the bilayer; that stretch reads LNTYYSLTASTLSTFALSALV. At 273–282 the chain is on the cytoplasmic side; it reads GKDGRLDMVH. The chain crosses the membrane as a helical span at residues 283 to 303; that stretch reads VQNAALAGGVVVGTASEMMLT. A topological domain (extracellular) is located at residue P304. A helical membrane pass occupies residues 305–325; sequence FGALAAGCLAGAISTLGYKFF. Over 326–346 the chain is Cytoplasmic; that stretch reads TPILESKLKIQDTCGVHNLHG. A helical transmembrane segment spans residues 347–367; the sequence is MPGVLGALLGALMTGLTTHEA. Topologically, residues 368–393 are extracellular; it reads YGDGLQSVFPLIAEGQRSATSQAIYQ. A helical transmembrane segment spans residues 394–414; it reads LFGLSVTLLFASAGGVLGGLL. At 415–458 the chain is on the cytoplasmic side; it reads LKLPFLDAPPDSQCYEDQMCWEVPGEHGYEAQEALRVEEPDTEA. The interaction with ANK3 stretch occupies residues 416–424; that stretch reads KLPFLDAPP. A Basolateral sorting signal motif is present at residues 429 to 432; that stretch reads YEDQ.

This sequence belongs to the ammonium transporter (TC 2.A.49) family. Rh subfamily. As to quaternary structure, interacts (via C-terminus) with ANK2 and ANK3; required for targeting to the basolateral membrane. N-glycosylated.

The protein localises to the cell membrane. The protein resides in the basolateral cell membrane. It carries out the reaction NH4(+)(in) = NH4(+)(out). The catalysed reaction is methylamine(out) = methylamine(in). The enzyme catalyses CO2(out) = CO2(in). Its function is as follows. Ammonium transporter involved in the maintenance of acid-base homeostasis. Transports ammonium and its related derivative methylammonium across the basolateral plasma membrane of epithelial cells likely contributing to renal transepithelial ammonia transport and ammonia metabolism. May transport either NH4(+) or NH3 ammonia species predominantly mediating an electrogenic NH4(+) transport. May act as a CO2 channel providing for renal acid secretion. In Oryctolagus cuniculus (Rabbit), this protein is Ammonium transporter Rh type B (RHBG).